The chain runs to 179 residues: MAKLHDKYQETVVAELTKKFGYTSVMQVPRIEKITLNMGVGEAVADKKVMEHAVRDMTAIAGQKPVVTVARKSVAGFKIREGYPIGCKVTLRGERMWEFLERLVDIAIPRIRDFRGLSAKAFDGRGNYAMGVREQIIFPEIDYDKIDKIRGMDIVITTSANTDEEGRALLDAFNFPFKK.

This sequence belongs to the universal ribosomal protein uL5 family. Part of the 50S ribosomal subunit; part of the 5S rRNA/L5/L18/L25 subcomplex. Contacts the 5S rRNA and the P site tRNA. Forms a bridge to the 30S subunit in the 70S ribosome.

This is one of the proteins that bind and probably mediate the attachment of the 5S RNA into the large ribosomal subunit, where it forms part of the central protuberance. In the 70S ribosome it contacts protein S13 of the 30S subunit (bridge B1b), connecting the 2 subunits; this bridge is implicated in subunit movement. Contacts the P site tRNA; the 5S rRNA and some of its associated proteins might help stabilize positioning of ribosome-bound tRNAs. The protein is Large ribosomal subunit protein uL5 of Shewanella sp. (strain MR-4).